We begin with the raw amino-acid sequence, 416 residues long: UDP-N-acetylglucosamine 1-carboxyvinyltransferase (416 aa).

22–23 (KN) contacts phosphoenolpyruvate. Residue arginine 91 coordinates UDP-N-acetyl-alpha-D-glucosamine. Cysteine 115 serves as the catalytic Proton donor. The residue at position 115 (cysteine 115) is a 2-(S-cysteinyl)pyruvic acid O-phosphothioketal. Positions 304 and 326 each coordinate UDP-N-acetyl-alpha-D-glucosamine.

It belongs to the EPSP synthase family. MurA subfamily.

The protein localises to the cytoplasm. It catalyses the reaction phosphoenolpyruvate + UDP-N-acetyl-alpha-D-glucosamine = UDP-N-acetyl-3-O-(1-carboxyvinyl)-alpha-D-glucosamine + phosphate. The protein operates within cell wall biogenesis; peptidoglycan biosynthesis. In terms of biological role, cell wall formation. Adds enolpyruvyl to UDP-N-acetylglucosamine. This Thermodesulfovibrio yellowstonii (strain ATCC 51303 / DSM 11347 / YP87) protein is UDP-N-acetylglucosamine 1-carboxyvinyltransferase.